Reading from the N-terminus, the 314-residue chain is Acetaldehyde dehydrogenase 1 (314 aa).

Residue 15-18 (SGNI) participates in NAD(+) binding. Catalysis depends on Cys-133, which acts as the Acyl-thioester intermediate. NAD(+)-binding positions include 164–172 (SAGPGTRAN) and Asn-291.

Belongs to the acetaldehyde dehydrogenase family.

It carries out the reaction acetaldehyde + NAD(+) + CoA = acetyl-CoA + NADH + H(+). This is Acetaldehyde dehydrogenase 1 from Paraburkholderia xenovorans (strain LB400).